Consider the following 345-residue polypeptide: Aspartate--ammonia ligase (345 aa).

It belongs to the class-II aminoacyl-tRNA synthetase family. AsnA subfamily.

Its subcellular location is the cytoplasm. The catalysed reaction is L-aspartate + NH4(+) + ATP = L-asparagine + AMP + diphosphate + H(+). Its pathway is amino-acid biosynthesis; L-asparagine biosynthesis; L-asparagine from L-aspartate (ammonia route): step 1/1. The chain is Aspartate--ammonia ligase from Bacteroides thetaiotaomicron (strain ATCC 29148 / DSM 2079 / JCM 5827 / CCUG 10774 / NCTC 10582 / VPI-5482 / E50).